A 215-amino-acid polypeptide reads, in one-letter code: MMKLLLIAAAAFVAVSADPIHYDKITEEINKAVDEAVAAIEKSETFDPMKVPDHSDKFERHIGIIDLKGELDMRNIQVRGLKQMKRVGDANVKSEDGVVKAHLLVGVHDDVVSMEYDLAYKLGDLHPNTHVISDIQDFVVELSLEVSEEGNMTLTSFEVRQFANVVNHIGGLSILDPIFAVLSDVLTAIFQDTVRAEMTKVLAPAFKKELERNNQ.

An N-terminal signal peptide occupies residues 1-17 (MMKLLLIAAAAFVAVSA). Asn151 carries an N-linked (GlcNAc...) asparagine glycan.

This sequence belongs to the mite group 7 allergen family.

It localises to the secreted. The chain is Mite allergen Der p 7 (DERP7) from Dermatophagoides pteronyssinus (European house dust mite).